The chain runs to 1026 residues: MKPLLLVLALCGAQVHAHSVGLRPDYNDYSDEDTRRDWLPEPLKPVPWQSETRYAQPQEAVVQAPEVGQILGISGHKTIANRPVNAFLGIRYGTVGGGLARFQAAQPIGYQGRVNATVQSPNCAQFPELDRLRLSESRGENVDDCLTLDIYAPEGANQLPVLVFVHGEMLFDGGSEEAQPDYVLEKDVLLVSINYRLAPFGFLSALTDELPGNVALSDLQLALEWLQRNVVHFGGNAGQVTLVGQAGGATLAHALSLSGRAGNLFQQLILQSGTALNPYLIDNQPLDTLSTFARLARCPPPSINPSAQGLKPLYDCLARLPTSQLVAAFEQLLLQNEHLGLTQLGGFKLVVGDPLGFLPSHPASLATNSSLALPMIIGATKDASAFIVSRIYDQLARLQSRNVSDYIDVVLRHTAPPSEHRLWKQWALREIFTPIQEQTASLQTVAPGLLELSNYILYRAPVINSISQSYRSVPAYLYTFDYRGEHHRFGHLSNPLPFGVDASLSDDSVYLFPYPPEASRLNPLDRSLSRALVTMWVNFATTGVPNPSSGVWPQATSEYGPFLRFTNNQQSPLELDPHFGEGIYLPNYRVIYKPTTNFSPPITTTTTTTTTTTTTSRPYAYNPYANWQNRPSQQHPNWHPADPEYVRAQEARQQEFIREREQRRREQQLRDQQRYPQQEPREQQDERIRQQREQEERLRQQREQEERLRQQRELEERIRQQQEREQYEREQQEREQREREELERQQREREQQQPEQQPEYNPEPVNPWGYPVQEPQPDDNPEDGRLPYPSYEQYGPEGNENLPETDANRNFSEEDREQQQQEQLRREQQEQQEREYQLQLEREQQEREQQERGQQEPGPEEYPSYEEYSRALQEKNAERDRIYAEEQERERQQQETLLQENQQHPEQSLPEEQPTHPNYEAYDGDRSYAEEQEREQQRRDQVEQEREEQPDEDQGEEYERSPDEEEAAEQDVLKVEDFPSYEAYLEAATKLREEQEEQEKLEEERYRAQQEEEDRIQAERERNSRN.

The N-terminal stretch at 1–17 is a signal peptide; sequence MKPLLLVLALCGAQVHA. Sulfotyrosine occurs at positions 26 and 29. N115 carries N-linked (GlcNAc...) asparagine glycosylation. A disulfide bond links C123 and C145. A Sulfotyrosine modification is found at Y182. C298 and C316 form a disulfide bridge. Residues N368 and N402 are each glycosylated (N-linked (GlcNAc...) asparagine). The residue at position 559 (Y559) is a Sulfotyrosine. Residues 601 to 641 form a disordered region; the sequence is PITTTTTTTTTTTTTSRPYAYNPYANWQNRPSQQHPNWHPA. Low complexity predominate over residues 603–615; that stretch reads TTTTTTTTTTTTT. Over residues 625–636 the composition is skewed to polar residues; it reads ANWQNRPSQQHP. Y645 is subject to Sulfotyrosine. 2 disordered regions span residues 659–695 and 723–1026; these read EREQRRREQQLRDQQRYPQQEPREQQDERIRQQREQE and EREQ…NSRN. Residues 723-752 are compositionally biased toward basic and acidic residues; the sequence is EREQYEREQQEREQREREELERQQREREQQ. Y727 is subject to Sulfotyrosine. A glycan (N-linked (GlcNAc...) asparagine) is linked at N810. Over residues 811–854 the composition is skewed to basic and acidic residues; that stretch reads FSEEDREQQQQEQLRREQQEQQEREYQLQLEREQQEREQQERGQ. Sulfotyrosine occurs at positions 836, 862, 865, 868, 922, and 928. The span at 855–866 shows a compositional bias: low complexity; that stretch reads QEPGPEEYPSYE. The span at 867–893 shows a compositional bias: basic and acidic residues; the sequence is EYSRALQEKNAERDRIYAEEQERERQQ. Positions 923–944 are enriched in basic and acidic residues; the sequence is DGDRSYAEEQEREQQRRDQVEQ. Residues 945–969 show a composition bias toward acidic residues; sequence EREEQPDEDQGEEYERSPDEEEAAE. Sulfotyrosine occurs at positions 981, 984, and 1006. The span at 1002–1026 shows a compositional bias: basic and acidic residues; sequence EEERYRAQQEEEDRIQAERERNSRN.

It in the N-terminal section; belongs to the type-B carboxylesterase/lipase family. In terms of processing, extensively O-glycosylated and also N-glycosylated. Post-translationally, about four tyrosines are sulfated.

It is found in the secreted. Its subcellular location is the extracellular space. The protein localises to the extracellular matrix. The protein resides in the basement membrane. Functionally, not known. Binds calcium ions. This chain is Glutactin (Glt), found in Drosophila melanogaster (Fruit fly).